The chain runs to 974 residues: GATOR2 complex protein WDR59 (974 aa).

WD repeat units lie at residues 57-98 (QSKW…GEVG), 103-143 (GHTR…KPTV), 146-185 (SAVA…TAVE), 189-229 (AHLS…KYLN), 232-276 (PCQV…TPVH), 278-318 (FVGH…RVDS), and 319-362 (QMQR…TASH). The disordered stretch occupies residues 350–374 (HTEDTDHQHTASHGEEEALKEDPPR). Residues 393–494 (QEFSLINVQI…RQLVSCLESF (102 aa)) form the RWD domain. S564 bears the Phosphoserine mark. One copy of the WD 8 repeat lies at 668–706 (LNVNDIQETCQKNAASALLVGRKDLVQVWSLATVATDLC). Residues S821, S822, and S830 each carry the phosphoserine modification. The segment at 831-852 (LTYSDPRERERDQHDKNKRLLD) is disordered. Basic and acidic residues predominate over residues 835–851 (DPRERERDQHDKNKRLL). The segment at 901–920 (YCSHCRSEVRGTQCAICKGF) adopts a C4-type zinc-finger fold. Residues C902, C905, C914, C917, C927, C938, H943, H946, H949, C960, C964, C966, and C968 each contribute to the Zn(2+) site. The segment at 921–973 (TFQCAICHVAVRGSSNFCLTCGHGGHTSHMMEWFRTQEVCPTGCGCHCLLEST) adopts an RING-type; atypical zinc-finger fold.

Belongs to the WD repeat WDR59 family. Component of the GATOR2 subcomplex, composed of MIOS, SEC13, SEH1L, WDR24 and WDR59. The GATOR2 complex interacts with CASTOR1 and CASTOR2; the interaction is negatively regulated by arginine. The GATOR2 complex interacts with SESN1, SESN2 and SESN3; the interaction is negatively regulated by amino acids. Interacts with DDB1-CUL4A/B E3 ligase complexes.

It localises to the lysosome membrane. The GATOR2 complex is negatively regulated by the upstream amino acid sensors CASTOR1 and SESN2, which sequester the GATOR2 complex in absence of amino acids. In the presence of abundant amino acids, GATOR2 is released from CASTOR1 and SESN2 and activated. As a component of the GATOR2 complex, functions as an activator of the amino acid-sensing branch of the mTORC1 signaling pathway. The GATOR2 complex indirectly activates mTORC1 through the inhibition of the GATOR1 subcomplex. GATOR2 probably acts as an E3 ubiquitin-protein ligase toward GATOR1. In the presence of abundant amino acids, the GATOR2 complex mediates ubiquitination of the NPRL2 core component of the GATOR1 complex, leading to GATOR1 inactivation. In the absence of amino acids, GATOR2 is inhibited, activating the GATOR1 complex. The chain is GATOR2 complex protein WDR59 from Homo sapiens (Human).